Here is a 256-residue protein sequence, read N- to C-terminus: Tetraspanin-32 (256 aa).

A run of 4 helical transmembrane segments spans residues 15–35 (LITN…VVVI), 61–81 (AFYV…LSTI), 90–110 (LMAA…QVAF), and 203–223 (CTSL…WFAI).

This sequence belongs to the tetraspanin (TM4SF) family. Expressed exclusively in hematopoietic tissues. Expression detected in spleen, thymus, bone marrow and peripheral blood leukocytes but not in heart, brain, lung, liver, kidney or testis.

It is found in the membrane. This chain is Tetraspanin-32 (Tspan32), found in Mus musculus (Mouse).